The following is a 60-amino-acid chain: Large ribosomal subunit protein bL32 (60 aa).

Residues 1–16 (MAVPKRKTSPSKRGMR) show a composition bias toward basic residues. The segment at 1 to 60 (MAVPKRKTSPSKRGMRRSADALKAPTYVEDKNSGELRRPHHVDLKTGMYRGRQVLEPKEA) is disordered. Over residues 28–44 (VEDKNSGELRRPHHVDL) the composition is skewed to basic and acidic residues.

Belongs to the bacterial ribosomal protein bL32 family.

The sequence is that of Large ribosomal subunit protein bL32 from Chelativorans sp. (strain BNC1).